Consider the following 1727-residue polypeptide: Nucleoporin alm1 (1727 aa).

Coiled coils occupy residues 57–361 (QEVN…KNTS), 443–463 (NFLS…QAEL), 542–740 (IKEA…AEEL), 804–1106 (AARK…INES), 1223–1427 (GERS…QLNK), 1497–1555 (NEEE…AESA), and 1601–1664 (QKEW…KKDS). Residues 1423–1448 (EQLNKPSATPTATTQSEPSTVSLEEF) are compositionally biased toward polar residues. 3 disordered regions span residues 1423–1459 (EQLN…SSTQ), 1477–1500 (EKVR…NEEE), and 1656–1727 (LEQS…KKAK). Composition is skewed to polar residues over residues 1672–1684 (ASKN…SNSE) and 1702–1714 (VDTN…SSSD). At S1706 the chain carries Phosphoserine.

It localises to the nucleus. Its subcellular location is the nuclear pore complex. It is found in the nucleus envelope. Its function is as follows. Maintains the proteasome and its anchor cut8 at the nucleus envelope and is required for kinetochore component proteostasis. Proper kinetochore stoichiometry ensures the correct attachment of kinetochores to spindle microtubules during cytokinesis. Required for the localization of spindle assembly checkpoint (SAC) protein mad2 and bub1 to the nucleus envelope during interphase, but not their localization during mitosis. The polypeptide is Nucleoporin alm1 (Schizosaccharomyces pombe (strain 972 / ATCC 24843) (Fission yeast)).